Consider the following 331-residue polypeptide: Ketol-acid reductoisomerase (NADP(+)) (331 aa).

Residues 2-182 (ARMYYDEDAN…GGTRGGVLET (181 aa)) form the KARI N-terminal Rossmann domain. Residues 25-28 (YGSQ), Ser-51, Ser-53, and 83-86 (DEVQ) each bind NADP(+). Residue His-108 is part of the active site. Gly-134 is an NADP(+) binding site. A KARI C-terminal knotted domain is found at 183-328 (TFREETETDL…KDLRAMFSWL (146 aa)). Mg(2+)-binding residues include Asp-191, Glu-195, Glu-227, and Glu-231. Residue Ser-252 participates in substrate binding.

It belongs to the ketol-acid reductoisomerase family. Requires Mg(2+) as cofactor.

The enzyme catalyses (2R)-2,3-dihydroxy-3-methylbutanoate + NADP(+) = (2S)-2-acetolactate + NADPH + H(+). It catalyses the reaction (2R,3R)-2,3-dihydroxy-3-methylpentanoate + NADP(+) = (S)-2-ethyl-2-hydroxy-3-oxobutanoate + NADPH + H(+). It participates in amino-acid biosynthesis; L-isoleucine biosynthesis; L-isoleucine from 2-oxobutanoate: step 2/4. The protein operates within amino-acid biosynthesis; L-valine biosynthesis; L-valine from pyruvate: step 2/4. In terms of biological role, involved in the biosynthesis of branched-chain amino acids (BCAA). Catalyzes an alkyl-migration followed by a ketol-acid reduction of (S)-2-acetolactate (S2AL) to yield (R)-2,3-dihydroxy-isovalerate. In the isomerase reaction, S2AL is rearranged via a Mg-dependent methyl migration to produce 3-hydroxy-3-methyl-2-ketobutyrate (HMKB). In the reductase reaction, this 2-ketoacid undergoes a metal-dependent reduction by NADPH to yield (R)-2,3-dihydroxy-isovalerate. The sequence is that of Ketol-acid reductoisomerase (NADP(+)) from Trichormus variabilis (strain ATCC 29413 / PCC 7937) (Anabaena variabilis).